Here is a 177-residue protein sequence, read N- to C-terminus: Large ribosomal subunit protein bL9 (177 aa).

The segment at 151 to 177 (EDEEIAEAAPVAEAQAEADGHSTEETA) is disordered. A compositionally biased stretch (low complexity) spans 157-167 (EAAPVAEAQAE). Basic and acidic residues predominate over residues 168-177 (ADGHSTEETA).

The protein belongs to the bacterial ribosomal protein bL9 family.

In terms of biological role, binds to the 23S rRNA. The sequence is that of Large ribosomal subunit protein bL9 from Solidesulfovibrio magneticus (strain ATCC 700980 / DSM 13731 / RS-1) (Desulfovibrio magneticus).